The following is a 383-amino-acid chain: Glutamyl-tRNA reductase (383 aa).

Residues 38–41 (TCNR), Ser82, 87–89 (EDQ), and Gln93 contribute to the substrate site. Cys39 serves as the catalytic Nucleophile. Residue 161 to 166 (GAGEIA) coordinates NADP(+).

Belongs to the glutamyl-tRNA reductase family. Homodimer.

It catalyses the reaction (S)-4-amino-5-oxopentanoate + tRNA(Glu) + NADP(+) = L-glutamyl-tRNA(Glu) + NADPH + H(+). It participates in porphyrin-containing compound metabolism; protoporphyrin-IX biosynthesis; 5-aminolevulinate from L-glutamyl-tRNA(Glu): step 1/2. Catalyzes the NADPH-dependent reduction of glutamyl-tRNA(Glu) to glutamate 1-semialdehyde (GSA). In Methanococcus aeolicus (strain ATCC BAA-1280 / DSM 17508 / OCM 812 / Nankai-3), this protein is Glutamyl-tRNA reductase.